The primary structure comprises 1220 residues: Pesticidal crystal protein Cry5Ac (1220 aa).

The disordered stretch occupies residues 1194–1220 (PLPTDDQNSEGNTAFSTNSDTSMNNNQ). Positions 1198–1220 (DDQNSEGNTAFSTNSDTSMNNNQ) are enriched in polar residues.

Belongs to the delta endotoxin family.

Its function is as follows. Promotes colloidosmotic lysis by binding to the midgut epithelial cells of hymenopteran species. The sequence is that of Pesticidal crystal protein Cry5Ac (cry5Ac) from Bacillus thuringiensis.